The sequence spans 70 residues: uncharacterized protein (70 aa).

A helical membrane pass occupies residues 50–70 (INVVLVLIIALIIFILMLDGV).

The protein resides in the membrane. This is an uncharacterized protein from Dictyostelium discoideum (Social amoeba).